The primary structure comprises 261 residues: Cytochrome c oxidase subunit 3 (261 aa).

The Mitochondrial matrix segment spans residues 1–15 (MTHQTHAYHMVNPSP). A helical membrane pass occupies residues 16–34 (WPLTGALSALLMTSGLIMW). The Mitochondrial intermembrane segment spans residues 35 to 40 (FHFNST). The helical transmembrane segment at 41–66 (ALLMLGLTTNMLTMYQWWRDIVREST) threads the bilayer. The Mitochondrial matrix segment spans residues 67-72 (FQGHHT). A helical membrane pass occupies residues 73–105 (PTVQKGLRYGMILFIISEVLFFTGFFWAFYHSS). The Mitochondrial intermembrane segment spans residues 106–128 (LAPTPELGGCWPPTGIHPLNPLE). Residues 129-152 (VPLLNTSVLLASGVSITWAHHSLM) form a helical membrane-spanning segment. Residues 153-155 (EGN) lie on the Mitochondrial matrix side of the membrane. A helical transmembrane segment spans residues 156–183 (RNHMLQALFITIALGVYFTLLQASEYYE). The Mitochondrial intermembrane segment spans residues 184-190 (APFTISD). The chain crosses the membrane as a helical span at residues 191–223 (GVYGSTFFVATGFHGLHVIIGSTFLIVCFFRQL). Topologically, residues 224–232 (KFHFTSNHH) are mitochondrial matrix. A helical membrane pass occupies residues 233–256 (FGFEAAAWYWHFVDVVWLFLYVSI). Residues 257–261 (YWWGS) are Mitochondrial intermembrane-facing.

It belongs to the cytochrome c oxidase subunit 3 family. In terms of assembly, component of the cytochrome c oxidase (complex IV, CIV), a multisubunit enzyme composed of 14 subunits. The complex is composed of a catalytic core of 3 subunits MT-CO1, MT-CO2 and MT-CO3, encoded in the mitochondrial DNA, and 11 supernumerary subunits COX4I, COX5A, COX5B, COX6A, COX6B, COX6C, COX7A, COX7B, COX7C, COX8 and NDUFA4, which are encoded in the nuclear genome. The complex exists as a monomer or a dimer and forms supercomplexes (SCs) in the inner mitochondrial membrane with NADH-ubiquinone oxidoreductase (complex I, CI) and ubiquinol-cytochrome c oxidoreductase (cytochrome b-c1 complex, complex III, CIII), resulting in different assemblies (supercomplex SCI(1)III(2)IV(1) and megacomplex MCI(2)III(2)IV(2)).

It is found in the mitochondrion inner membrane. The enzyme catalyses 4 Fe(II)-[cytochrome c] + O2 + 8 H(+)(in) = 4 Fe(III)-[cytochrome c] + 2 H2O + 4 H(+)(out). In terms of biological role, component of the cytochrome c oxidase, the last enzyme in the mitochondrial electron transport chain which drives oxidative phosphorylation. The respiratory chain contains 3 multisubunit complexes succinate dehydrogenase (complex II, CII), ubiquinol-cytochrome c oxidoreductase (cytochrome b-c1 complex, complex III, CIII) and cytochrome c oxidase (complex IV, CIV), that cooperate to transfer electrons derived from NADH and succinate to molecular oxygen, creating an electrochemical gradient over the inner membrane that drives transmembrane transport and the ATP synthase. Cytochrome c oxidase is the component of the respiratory chain that catalyzes the reduction of oxygen to water. Electrons originating from reduced cytochrome c in the intermembrane space (IMS) are transferred via the dinuclear copper A center (CU(A)) of subunit 2 and heme A of subunit 1 to the active site in subunit 1, a binuclear center (BNC) formed by heme A3 and copper B (CU(B)). The BNC reduces molecular oxygen to 2 water molecules using 4 electrons from cytochrome c in the IMS and 4 protons from the mitochondrial matrix. This is Cytochrome c oxidase subunit 3 (MT-CO3) from Cephalophorus natalensis (Natal red duiker).